We begin with the raw amino-acid sequence, 212 residues long: Octanoyltransferase (212 aa).

Positions 31–209 constitute a BPL/LPL catalytic domain; it reads AETQDEIWLV…HFADLLGYNI (179 aa). Residues 70-77, 138-140, and 151-153 contribute to the substrate site; these read RGGQITYH, SLG, and GLA. Cys169 acts as the Acyl-thioester intermediate in catalysis.

This sequence belongs to the LipB family.

It is found in the cytoplasm. The enzyme catalyses octanoyl-[ACP] + L-lysyl-[protein] = N(6)-octanoyl-L-lysyl-[protein] + holo-[ACP] + H(+). It functions in the pathway protein modification; protein lipoylation via endogenous pathway; protein N(6)-(lipoyl)lysine from octanoyl-[acyl-carrier-protein]: step 1/2. Its function is as follows. Catalyzes the transfer of endogenously produced octanoic acid from octanoyl-acyl-carrier-protein onto the lipoyl domains of lipoate-dependent enzymes. Lipoyl-ACP can also act as a substrate although octanoyl-ACP is likely to be the physiological substrate. In Haemophilus influenzae (strain PittEE), this protein is Octanoyltransferase.